Consider the following 127-residue polypeptide: Putative truncated L-serine dehydratase YIL168W (127 aa).

Position 39 is an N6-(pyridoxal phosphate)lysine (lysine 39).

The protein belongs to the serine/threonine dehydratase family. Pyridoxal 5'-phosphate serves as cofactor.

It localises to the cytoplasm. It carries out the reaction L-serine = pyruvate + NH4(+). It functions in the pathway carbohydrate biosynthesis; gluconeogenesis. This chain is Putative truncated L-serine dehydratase YIL168W, found in Saccharomyces cerevisiae (strain ATCC 204508 / S288c) (Baker's yeast).